The primary structure comprises 613 residues: Coiled-coil domain-containing protein 116 (613 aa).

The tract at residues 41–68 (KPGRVPHPPSTCGSSALQGQRRNKRHPQ) is disordered. Residues 51-60 (TCGSSALQGQ) show a composition bias toward polar residues. Residues 79-104 (ESQVLDSLETVVEKATERMAAMKTEA) are a coiled coil. Disordered stretches follow at residues 329 to 395 (CRDG…AQVA), 509 to 541 (RQAS…QATE), and 565 to 613 (MSAC…EDGV). Residue S386 is modified to Phosphoserine. The span at 512–539 (SRLSTSHCSTETPSVQQEPATHTAQDQA) shows a compositional bias: polar residues. A compositionally biased stretch (basic and acidic residues) spans 577–589 (KSKDMDNEGRDKA). Positions 590-613 (EIEDEDEDEFKDEDQDEDKDEDGV) are enriched in acidic residues.

It localises to the cytoplasm. The protein resides in the cytoskeleton. Its subcellular location is the microtubule organizing center. The protein localises to the centrosome. The protein is Coiled-coil domain-containing protein 116 (CCDC116) of Homo sapiens (Human).